Here is a 317-residue protein sequence, read N- to C-terminus: tRNA-cytidine(32) 2-sulfurtransferase (317 aa).

A PP-loop motif motif is present at residues 46–51; that stretch reads SGGKDS. [4Fe-4S] cluster is bound by residues Cys121, Cys124, and Cys212.

It belongs to the TtcA family. In terms of assembly, homodimer. Mg(2+) serves as cofactor. Requires [4Fe-4S] cluster as cofactor.

Its subcellular location is the cytoplasm. The catalysed reaction is cytidine(32) in tRNA + S-sulfanyl-L-cysteinyl-[cysteine desulfurase] + AH2 + ATP = 2-thiocytidine(32) in tRNA + L-cysteinyl-[cysteine desulfurase] + A + AMP + diphosphate + H(+). The protein operates within tRNA modification. Catalyzes the ATP-dependent 2-thiolation of cytidine in position 32 of tRNA, to form 2-thiocytidine (s(2)C32). The sulfur atoms are provided by the cysteine/cysteine desulfurase (IscS) system. The sequence is that of tRNA-cytidine(32) 2-sulfurtransferase from Shewanella loihica (strain ATCC BAA-1088 / PV-4).